Reading from the N-terminus, the 146-residue chain is Hemoglobin subunit beta (146 aa).

The Globin domain occupies 2-146; sequence HWSAEEKQLI…VAHALARKYH (145 aa). Heme b is bound by residues His63 and His92.

Belongs to the globin family. As to quaternary structure, heterotetramer of two alpha chains and two beta chains. In terms of tissue distribution, red blood cells.

Functionally, involved in oxygen transport from the lung to the various peripheral tissues. This is Hemoglobin subunit beta (HBB) from Streptopelia orientalis (Eastern turtle dove).